The following is a 382-amino-acid chain: Proton extrusion protein PxcA (382 aa).

4 helical membrane-spanning segments follow: residues 156–176 (TLIS…VQQV), 257–277 (AVKN…VCLF), 305–325 (IILF…TVLL), and 340–360 (FILL…KYWI).

It belongs to the CemA family.

It is found in the cell inner membrane. Its function is as follows. Required for H(+) efflux immediately after light irradiation to form a rapid H(+) concentration gradient across the thylakoid membranes. Together with PxcL, contributes to transient H(+) uptake following dark to light transition. The sequence is that of Proton extrusion protein PxcA from Synechococcus sp. (strain CC9311).